A 250-amino-acid polypeptide reads, in one-letter code: 5'-nucleotidase SurE (250 aa).

A divalent metal cation contacts are provided by aspartate 8, aspartate 9, serine 39, and asparagine 91.

This sequence belongs to the SurE nucleotidase family. A divalent metal cation is required as a cofactor.

The protein localises to the cytoplasm. It catalyses the reaction a ribonucleoside 5'-phosphate + H2O = a ribonucleoside + phosphate. In terms of biological role, nucleotidase that shows phosphatase activity on nucleoside 5'-monophosphates. This chain is 5'-nucleotidase SurE, found in Leptospira interrogans serogroup Icterohaemorrhagiae serovar copenhageni (strain Fiocruz L1-130).